Reading from the N-terminus, the 126-residue chain is C2H2-type zinc-finger transcription factor M5 (126 aa).

Disordered regions lie at residues 17 to 52 and 103 to 126; these read AQPDFEDWGDLGDLMPDVLPESNGSSSGTATDNDNR and EKKSCNRVRRYSNGRERPRPRVKD. The span at 38-48 shows a compositional bias: polar residues; that stretch reads SNGSSSGTATD. The C2H2-type 1; degenerate zinc finger occupies 51-76; it reads NRCWDHGCNGKKFLNHSNLVRHRREN. The segment at 83–115 adopts a C2H2-type 2; degenerate zinc-finger fold; it reads FTCPMCGAYFSRSTARNQHLEKKSCNRVRRYSN. Residues 115–126 show a composition bias toward basic and acidic residues; that stretch reads NGRERPRPRVKD.

The protein belongs to the GLI C2H2-type zinc-finger protein family.

The protein resides in the nucleus. Transcription factor that probably regulates the expression of the gene cluster that mediates the biosynthesis of squalestatin S1 (SQS1, also known as zaragozic acid A), a heavily oxidized fungal polyketide that offers potent cholesterol lowering activity by targeting squalene synthase (SS). The polypeptide is C2H2-type zinc-finger transcription factor M5 (Phoma sp. (strain ATCC 20986 / MF5453)).